Consider the following 342-residue polypeptide: Transmembrane protein 59-like (342 aa).

An N-terminal signal peptide occupies residues 1 to 24; the sequence is MAAVALMPPPLLLLLLLASPPAAS. A glycan (N-linked (GlcNAc...) asparagine) is linked at Asn-97. Residues 268–290 form a helical membrane-spanning segment; that stretch reads WILACCLFLSVLVMLWLSCSTLV. The short motif at 340 to 342 is the Microbody targeting signal element; it reads TKL.

Belongs to the TMEM59 family. Expressed preferentially at high level in the brain.

Its subcellular location is the golgi apparatus membrane. Its function is as follows. Modulates the O-glycosylation and complex N-glycosylation steps occurring during the Golgi maturation of APP. Inhibits APP transport to the cell surface and further shedding. In Homo sapiens (Human), this protein is Transmembrane protein 59-like (TMEM59L).